Here is a 491-residue protein sequence, read N- to C-terminus: Cobyric acid synthase (491 aa).

Residues 246-435 (KIDVAVIKLP…IHGIFDGANF (190 aa)) form the GATase cobBQ-type domain. The active-site Nucleophile is the C327. H427 is an active-site residue.

It belongs to the CobB/CobQ family. CobQ subfamily.

It functions in the pathway cofactor biosynthesis; adenosylcobalamin biosynthesis. Functionally, catalyzes amidations at positions B, D, E, and G on adenosylcobyrinic A,C-diamide. NH(2) groups are provided by glutamine, and one molecule of ATP is hydrogenolyzed for each amidation. The polypeptide is Cobyric acid synthase (Clostridium acetobutylicum (strain ATCC 824 / DSM 792 / JCM 1419 / IAM 19013 / LMG 5710 / NBRC 13948 / NRRL B-527 / VKM B-1787 / 2291 / W)).